A 220-amino-acid chain; its full sequence is 7-cyano-7-deazaguanine synthase (220 aa).

Ile-7–Ala-17 lines the ATP pocket. The Zn(2+) site is built by Cys-187, Cys-195, Cys-198, and Cys-201.

Belongs to the QueC family. Zn(2+) serves as cofactor.

The enzyme catalyses 7-carboxy-7-deazaguanine + NH4(+) + ATP = 7-cyano-7-deazaguanine + ADP + phosphate + H2O + H(+). Its pathway is purine metabolism; 7-cyano-7-deazaguanine biosynthesis. Functionally, catalyzes the ATP-dependent conversion of 7-carboxy-7-deazaguanine (CDG) to 7-cyano-7-deazaguanine (preQ(0)). In Campylobacter hominis (strain ATCC BAA-381 / DSM 21671 / CCUG 45161 / LMG 19568 / NCTC 13146 / CH001A), this protein is 7-cyano-7-deazaguanine synthase.